A 555-amino-acid polypeptide reads, in one-letter code: MSMKCFQCQETVKNQGCTVKGVCGKPDNVANLQDVLIYTLKGISFYAHEGRNLGVKDEEVDRFVMDNLFATVTNVNFSEQDFIDRIKQSFKIRDQIKEQVMLKYREKYGENLDNKVPSNATWYTEDELNFKTKGEEVGVHSSDNEDINSLRELLTYGIKGIAAYAHHAYTLNQKDDEIFAFMHKGLAATTDDSLSVDDLVSLVMECGKFGVNTMALLDKANTEAYGHPEPTQINIGVRNNPGILISGHDLKDMQELLEQTEGTGVDVYTHGEMLPANAYPAFKKYDHFVGNYGNAWWQQNEEFEKFNGPILMTTNCLVPPKDSYKDRVYTTGVVGFDGVTHIPEREAGESKDFSQIIEHAKKCAAPEELEQGEIPGGFAHNAVLSVADKVVEAVKNGDIKRFVVMGGCDGRHKSREYYTEFAKALPQDTIILTAGCAKYRYNKLDLGDIGGIPRVLDAGQCNDSYSLVVIAQKLAEAFELEDINDLPVSYNIAWYEQKAVTVLLSLLYLGVKKIYLGPTLPAFVSENVLNVLVDKFDMRPNSNVDEDLEKIMAGE.

4 residues coordinate [4Fe-4S] cluster: C5, C8, C17, and C23. Residues H248, E272, C316, C408, C436, C461, E496, and K498 each coordinate hybrid [4Fe-2O-2S] cluster. Residue C408 is modified to Cysteine persulfide.

It belongs to the HCP family. Requires [4Fe-4S] cluster as cofactor. Hybrid [4Fe-2O-2S] cluster is required as a cofactor.

It localises to the cytoplasm. It carries out the reaction A + NH4(+) + H2O = hydroxylamine + AH2 + H(+). In terms of biological role, catalyzes the reduction of hydroxylamine to form NH(3) and H(2)O. The chain is Hydroxylamine reductase from Natranaerobius thermophilus (strain ATCC BAA-1301 / DSM 18059 / JW/NM-WN-LF).